The following is a 132-amino-acid chain: Small ribosomal subunit protein uS8 (132 aa).

The protein belongs to the universal ribosomal protein uS8 family. As to quaternary structure, part of the 30S ribosomal subunit. Contacts proteins S5 and S12.

One of the primary rRNA binding proteins, it binds directly to 16S rRNA central domain where it helps coordinate assembly of the platform of the 30S subunit. This Rubrobacter xylanophilus (strain DSM 9941 / JCM 11954 / NBRC 16129 / PRD-1) protein is Small ribosomal subunit protein uS8.